We begin with the raw amino-acid sequence, 527 residues long: Probable serine/threonine-protein kinase DDB_G0271538 (527 aa).

Residues 1–10 (MNINFSKDDI) show a composition bias toward basic and acidic residues. Residues 1–24 (MNINFSKDDITGLPKSTKEEDEND) are disordered. The Protein kinase domain occupies 33–294 (LFMDVEIGRG…KIVVEGLKVL (262 aa)). Residues 39 to 47 (IGRGSFGQV) and Lys60 each bind ATP. Asp156 functions as the Proton acceptor in the catalytic mechanism. Disordered regions lie at residues 304-375 (VKGK…ISGS), 422-452 (FTPP…DDVP), and 485-527 (TALD…KKKL). Residues 313 to 324 (DPDEDSFIDPND) show a composition bias toward acidic residues. Low complexity predominate over residues 325–359 (DSNNNNNSENNNNNNDNSNENNENNNENNNNSNEN). Residues 440–452 (VDEDEDEDEDDVP) show a composition bias toward acidic residues. Residues 512–527 (PKKKPNNKNKKKKKKL) are compositionally biased toward basic residues.

Belongs to the protein kinase superfamily. TKL Ser/Thr protein kinase family.

The catalysed reaction is L-seryl-[protein] + ATP = O-phospho-L-seryl-[protein] + ADP + H(+). It catalyses the reaction L-threonyl-[protein] + ATP = O-phospho-L-threonyl-[protein] + ADP + H(+). The sequence is that of Probable serine/threonine-protein kinase DDB_G0271538 from Dictyostelium discoideum (Social amoeba).